We begin with the raw amino-acid sequence, 592 residues long: Aspartate--tRNA(Asp/Asn) ligase (592 aa).

Glutamate 176 serves as a coordination point for L-aspartate. Positions 200 to 203 (QIFK) are aspartate. Position 222 (arginine 222) interacts with L-aspartate. Residues 222 to 224 (RDE) and glutamine 231 each bind ATP. Histidine 450 serves as a coordination point for L-aspartate. Glutamate 484 contributes to the ATP binding site. Arginine 491 contacts L-aspartate. ATP is bound at residue 536–539 (GLDR).

The protein belongs to the class-II aminoacyl-tRNA synthetase family. Type 1 subfamily. As to quaternary structure, homodimer.

The protein localises to the cytoplasm. The enzyme catalyses tRNA(Asx) + L-aspartate + ATP = L-aspartyl-tRNA(Asx) + AMP + diphosphate. Its function is as follows. Aspartyl-tRNA synthetase with relaxed tRNA specificity since it is able to aspartylate not only its cognate tRNA(Asp) but also tRNA(Asn). Reaction proceeds in two steps: L-aspartate is first activated by ATP to form Asp-AMP and then transferred to the acceptor end of tRNA(Asp/Asn). The sequence is that of Aspartate--tRNA(Asp/Asn) ligase from Anoxybacillus flavithermus (strain DSM 21510 / WK1).